Here is a 301-residue protein sequence, read N- to C-terminus: Isonocardicin synthase (301 aa).

As to quaternary structure, monomer.

The catalysed reaction is nocardicin G + S-adenosyl-L-methionine = isonocardicin C + S-methyl-5'-thioadenosine + H(+). It carries out the reaction nocardicin E + S-adenosyl-L-methionine = isonocardicin A + S-methyl-5'-thioadenosine + H(+). Its pathway is antibiotic biosynthesis. Functionally, involved in the biosynthesis of the beta-lactam antibiotic nocardicin A. In the presence of S-adenosyl-L-methionine (AdoMet), catalyzes the transfer of a 3-amino-3-carboxypropyl group from AdoMet to nocardicin G, forming isonocardicin C. Can also catalyze the transformation of nocardicin E and F to isonocardicin A and B, respectively, but in vivo substrate is probably nocardicin G. This chain is Isonocardicin synthase, found in Nocardia uniformis subsp. tsuyamanensis.